The sequence spans 149 residues: Sex-regulated protein janus-A (149 aa).

K46 is a substrate binding site. The Proton acceptor role is filled by H77. 118–120 (STG) is a binding site for substrate.

The protein belongs to the janus family.

Its function is as follows. JanA and janB regulate somatic sex differentiation. This Drosophila pseudoobscura pseudoobscura (Fruit fly) protein is Sex-regulated protein janus-A (janA).